The sequence spans 225 residues: MELRLSSGNILDEKVHKVGIIALGSFLENHGAVLPIDTDIKIASYIALKAAILTGAKFLGVVIPSTEYEYVKHGIHNKPEDIYYYLRFLINEGKKIGVEKFLIVNCHGGNILIEKFLKDLEYEFGVKVEMINIAFTHAATEEVSVGYVIGIAKADEKSLKEHNNFEKYPEVGMVGLKEARENNKAIDEEAKAVEKFGVRLDKNLGEKILNDAIEKVVDKVKEMIR.

Positions 28, 30, 39, and 107 each coordinate Fe cation.

This sequence belongs to the creatininase superfamily. FAPy deformylase family. Homodimer. The cofactor is Fe(2+). Zn(2+) serves as cofactor.

The catalysed reaction is 2-amino-5-formylamino-6-(5-phospho-D-ribosylamino)pyrimidin-4(3H)-one + H2O = 2,5-diamino-6-(1-D-ribosylamino)pyrimidin-4(3H)-one 5'-phosphate + formate + H(+). The protein operates within cofactor biosynthesis; coenzyme F420 biosynthesis. It participates in cofactor biosynthesis; riboflavin biosynthesis. Catalyzes the hydrolysis of the formamide of 2-amino-5-formylamino-6-ribosylamino-4(3H)-pyrimidinone 5'-monophosphate (FAPy) to form 2,5-diamino-6-ribosylamino-4(3H)-pyrimidinone 5'-phosphate (APy). The sequence is that of 2-amino-5-formylamino-6-ribosylaminopyrimidin-4(3H)-one 5'-monophosphate deformylase from Methanocaldococcus fervens (strain DSM 4213 / JCM 15782 / AG86) (Methanococcus fervens).